The following is a 144-amino-acid chain: Putative sugar phosphate isomerase RC0402 (144 aa).

His-12 contributes to the substrate binding site. Catalysis depends on His-101, which acts as the Proton donor. Arg-135 provides a ligand contact to substrate.

The protein belongs to the LacAB/RpiB family.

The protein is Putative sugar phosphate isomerase RC0402 of Rickettsia conorii (strain ATCC VR-613 / Malish 7).